The sequence spans 114 residues: Large ribosomal subunit protein uL22 (114 aa).

The protein belongs to the universal ribosomal protein uL22 family. Part of the 50S ribosomal subunit.

Functionally, this protein binds specifically to 23S rRNA; its binding is stimulated by other ribosomal proteins, e.g. L4, L17, and L20. It is important during the early stages of 50S assembly. It makes multiple contacts with different domains of the 23S rRNA in the assembled 50S subunit and ribosome. Its function is as follows. The globular domain of the protein is located near the polypeptide exit tunnel on the outside of the subunit, while an extended beta-hairpin is found that lines the wall of the exit tunnel in the center of the 70S ribosome. This Streptococcus uberis (strain ATCC BAA-854 / 0140J) protein is Large ribosomal subunit protein uL22.